The sequence spans 177 residues: O-acetyl-ADP-ribose deacetylase (177 aa).

The Macro domain occupies 1-175; that stretch reads MKTRIHVVQG…LYERLLTQQG (175 aa). Substrate-binding positions include 11-12, Asn25, 33-35, and 122-126; these read DI, GVD, and STGVY. Residue Asp35 is the Proton acceptor of the active site.

It belongs to the MacroD-type family. YmdB subfamily. As to quaternary structure, homodimer. Interacts with RNase III.

It carries out the reaction 3''-O-acetyl-ADP-D-ribose + H2O = ADP-D-ribose + acetate + H(+). The enzyme catalyses 2''-O-acetyl-ADP-D-ribose + H2O = ADP-D-ribose + acetate + H(+). Deacetylates O-acetyl-ADP ribose to yield ADP-ribose and free acetate. Down-regulates ribonuclease 3 (RNase III) activity. Acts by interacting directly with the region of the ribonuclease that is required for dimerization/activation. This is O-acetyl-ADP-ribose deacetylase from Escherichia coli O157:H7.